A 196-amino-acid polypeptide reads, in one-letter code: ATP-dependent Clp protease proteolytic subunit (196 aa).

The active-site Nucleophile is the Ser101. His126 is a catalytic residue.

The protein belongs to the peptidase S14 family. In terms of assembly, component of the chloroplastic Clp protease core complex.

It is found in the plastid. The protein localises to the chloroplast stroma. The catalysed reaction is Hydrolysis of proteins to small peptides in the presence of ATP and magnesium. alpha-casein is the usual test substrate. In the absence of ATP, only oligopeptides shorter than five residues are hydrolyzed (such as succinyl-Leu-Tyr-|-NHMec, and Leu-Tyr-Leu-|-Tyr-Trp, in which cleavage of the -Tyr-|-Leu- and -Tyr-|-Trp bonds also occurs).. Cleaves peptides in various proteins in a process that requires ATP hydrolysis. Has a chymotrypsin-like activity. Plays a major role in the degradation of misfolded proteins. The protein is ATP-dependent Clp protease proteolytic subunit of Nasturtium officinale (Watercress).